A 205-amino-acid chain; its full sequence is Small ribosomal subunit protein mS26 (205 aa).

The transit peptide at 1–26 (MLRALSTLGARPLGRPPAQFLLLARG) directs the protein to the mitochondrion.

This sequence belongs to the mitochondrion-specific ribosomal protein mS26 family. Component of the mitochondrial ribosome small subunit (28S) which comprises a 12S rRNA and about 30 distinct proteins.

Its subcellular location is the mitochondrion. In Bos taurus (Bovine), this protein is Small ribosomal subunit protein mS26 (MRPS26).